The chain runs to 153 residues: Large ribosomal subunit protein uL15 (153 aa).

Residues 1–49 (MQLHNLYPFPEERKTRRRVGRGSGSGLGCTAGKGHKGQNARAGGGVAPG) are disordered. The span at 21-31 (RGSGSGLGCTA) shows a compositional bias: gly residues.

The protein belongs to the universal ribosomal protein uL15 family. In terms of assembly, part of the 50S ribosomal subunit.

Its function is as follows. Binds to the 23S rRNA. The polypeptide is Large ribosomal subunit protein uL15 (Desulfovibrio desulfuricans (strain ATCC 27774 / DSM 6949 / MB)).